Consider the following 274-residue polypeptide: Peroxiredoxin-4 (274 aa).

A signal peptide spans 1 to 40 (MEARSKLLDGTTASRRWTRKLVLLLPPLLLFLLRTESLQG). The region spanning 82-240 (AKISKPAPYW…TLRLVQAFQY (159 aa)) is the Thioredoxin domain. Residue C127 is the Cysteine sulfenic acid (-SOH) intermediate of the active site.

Belongs to the peroxiredoxin family. AhpC/Prx1 subfamily. As to quaternary structure, homodimer; disulfide-linked, upon oxidation. 5 homodimers assemble to form a ring-like decamer. The enzyme can be inactivated by further oxidation of the cysteine sulfenic acid (C(P)-SOH) to sulphinic acid (C(P)-SO2H) and sulphonic acid (C(P)-SO3H) instead of its condensation to a disulfide bond.

It is found in the cytoplasm. Its subcellular location is the endoplasmic reticulum. The enzyme catalyses a hydroperoxide + [thioredoxin]-dithiol = an alcohol + [thioredoxin]-disulfide + H2O. Functionally, thiol-specific peroxidase that catalyzes the reduction of hydrogen peroxide and organic hydroperoxides to water and alcohols, respectively. Plays a role in cell protection against oxidative stress by detoxifying peroxides and as sensor of hydrogen peroxide-mediated signaling events. Regulates the activation of NF-kappa-B in the cytosol by a modulation of I-kappa-B-alpha phosphorylation. The sequence is that of Peroxiredoxin-4 (Prdx4) from Mus musculus (Mouse).